Reading from the N-terminus, the 33-residue chain is Brevinin-2Rh (33 aa).

C27 and C33 are disulfide-bonded.

As to expression, expressed by the skin glands.

It is found in the secreted. Its function is as follows. Antimicrobial peptide. The protein is Brevinin-2Rh of Pelophylax ridibundus (Marsh frog).